A 274-amino-acid chain; its full sequence is Ribose-5-phosphate isomerase (274 aa).

This sequence belongs to the ribose 5-phosphate isomerase family.

It localises to the cytoplasm. The catalysed reaction is aldehydo-D-ribose 5-phosphate = D-ribulose 5-phosphate. It functions in the pathway carbohydrate degradation; pentose phosphate pathway; D-ribose 5-phosphate from D-ribulose 5-phosphate (non-oxidative stage): step 1/1. The sequence is that of Ribose-5-phosphate isomerase (rki1) from Schizosaccharomyces pombe (strain 972 / ATCC 24843) (Fission yeast).